The sequence spans 374 residues: Queuine tRNA-ribosyltransferase (374 aa).

The active-site Proton acceptor is Asp-89. Substrate-binding positions include 89 to 93 (DSGGF), Asp-143, Gln-185, and Gly-212. The segment at 243–249 (GVGKPED) is RNA binding. Asp-262 serves as the catalytic Nucleophile. The tract at residues 267–271 (TRNAR) is RNA binding; important for wobble base 34 recognition. Zn(2+) is bound by residues Cys-300, Cys-302, Cys-305, and His-331.

This sequence belongs to the queuine tRNA-ribosyltransferase family. As to quaternary structure, homodimer. Within each dimer, one monomer is responsible for RNA recognition and catalysis, while the other monomer binds to the replacement base PreQ1. Requires Zn(2+) as cofactor.

It catalyses the reaction 7-aminomethyl-7-carbaguanine + guanosine(34) in tRNA = 7-aminomethyl-7-carbaguanosine(34) in tRNA + guanine. It participates in tRNA modification; tRNA-queuosine biosynthesis. Catalyzes the base-exchange of a guanine (G) residue with the queuine precursor 7-aminomethyl-7-deazaguanine (PreQ1) at position 34 (anticodon wobble position) in tRNAs with GU(N) anticodons (tRNA-Asp, -Asn, -His and -Tyr). Catalysis occurs through a double-displacement mechanism. The nucleophile active site attacks the C1' of nucleotide 34 to detach the guanine base from the RNA, forming a covalent enzyme-RNA intermediate. The proton acceptor active site deprotonates the incoming PreQ1, allowing a nucleophilic attack on the C1' of the ribose to form the product. After dissociation, two additional enzymatic reactions on the tRNA convert PreQ1 to queuine (Q), resulting in the hypermodified nucleoside queuosine (7-(((4,5-cis-dihydroxy-2-cyclopenten-1-yl)amino)methyl)-7-deazaguanosine). This chain is Queuine tRNA-ribosyltransferase, found in Saccharophagus degradans (strain 2-40 / ATCC 43961 / DSM 17024).